Here is a 117-residue protein sequence, read N- to C-terminus: Large ribosomal subunit protein bL20c (117 aa).

It belongs to the bacterial ribosomal protein bL20 family.

It is found in the plastid. Its subcellular location is the chloroplast. In terms of biological role, binds directly to 23S ribosomal RNA and is necessary for the in vitro assembly process of the 50S ribosomal subunit. It is not involved in the protein synthesizing functions of that subunit. The chain is Large ribosomal subunit protein bL20c from Eucalyptus globulus subsp. globulus (Tasmanian blue gum).